We begin with the raw amino-acid sequence, 157 residues long: MSRRHAAEKKVIPGDPVYGSVVLERFINKVMLHGKKSIARKIVYGALERFAKRLGLENPLEGFEEALENAKPVLEVRSRRVGGATYQVPVEVAPDRRSCLAMQWIIKHARSKPGKCMEVGLANELIDCFNKQGATIKKREDTHRMAEANKAFAHYKW.

This sequence belongs to the universal ribosomal protein uS7 family. Part of the 30S ribosomal subunit. Contacts proteins S9 and S11.

One of the primary rRNA binding proteins, it binds directly to 16S rRNA where it nucleates assembly of the head domain of the 30S subunit. Is located at the subunit interface close to the decoding center, probably blocks exit of the E-site tRNA. The chain is Small ribosomal subunit protein uS7 from Chlamydia trachomatis serovar A (strain ATCC VR-571B / DSM 19440 / HAR-13).